The primary structure comprises 360 residues: C-C chemokine receptor type 4 (360 aa).

The Extracellular segment spans residues 1-39 (MNATEVTDTTQDETVYNSYYFYESMPKPCTKEGIKAFGE). N-linked (GlcNAc...) asparagine glycosylation is present at N2. A helical transmembrane segment spans residues 40–67 (VFLPPLYSLVFLLGLFGNSVVVLVLFKY). Residues 68–77 (KRLKSMTDVY) are Cytoplasmic-facing. The chain crosses the membrane as a helical span at residues 78–98 (LLNLAISDLLFVLSLPFWGYY). At 99 to 111 (AADQWVFGLGLCK) the chain is on the extracellular side. C110 and C187 are joined by a disulfide. The chain crosses the membrane as a helical span at residues 112–133 (IVSWMYLVGFYSGIFFIMLMSI). The Cytoplasmic portion of the chain corresponds to 134 to 150 (DRYLAIVHAVFSLKART). Residues 151–175 (LTYGVITSLITWSVAVFASLPGLLF) traverse the membrane as a helical segment. Over 176-206 (STCYTEHNHTYCKTQYSVNSTTWKVLSSLEI) the chain is Extracellular. 2 N-linked (GlcNAc...) asparagine glycosylation sites follow: N183 and N194. The chain crosses the membrane as a helical span at residues 207–226 (NVLGLLIPLGIMLFCYSMII). Residues 227–242 (RTLQHCKNEKKNRAVR) are Cytoplasmic-facing. Residues 243 to 267 (MIFAVVVLFLGFWTPYNVVLFLETL) traverse the membrane as a helical segment. At 268 to 284 (VELEVLQDCTLERYLDY) the chain is on the extracellular side. The chain crosses the membrane as a helical span at residues 285–308 (AIQATETLAFIHCCLNPVIYFFLG). Topologically, residues 309 to 360 (EKFRKYITQLFRTCRGPLVLCKHCDFLQVYSADMSSSSYTQSTVDHDFRDAL) are cytoplasmic.

It belongs to the G-protein coupled receptor 1 family. In terms of processing, in natural killer cells, CCL22 binding induces phosphorylation on yet undefined Ser/Thr residues, most probably by beta-adrenergic receptor kinases 1 and 2. Expressed in the thymus, macrophages and T- and B-cells.

The protein resides in the cell membrane. Its function is as follows. High affinity receptor for the C-C type chemokines CCL17/TARC and CCL22/MDC. The activity of this receptor is mediated by G(i) proteins which activate a phosphatidylinositol-calcium second messenger system. Could play a role in lipopolysaccharide (LPS)-induced endotoxic shock. In the CNS, could mediate hippocampal-neuron survival. The chain is C-C chemokine receptor type 4 (Ccr4) from Mus musculus (Mouse).